Here is a 477-residue protein sequence, read N- to C-terminus: Tripartite motif-containing protein 72 (477 aa).

Residues Leu14, Gln17, Pro29, Cys31, Thr34, Gln37, Thr53, Pro56, Gly86, Leu89, Val97, Glu100, Leu105, Gly108, Gly114, and Lys117 each coordinate Zn(2+). The segment at 16-59 (CQLCLELFRAPVTPECGHTFCQGCLTGVPKNQDQNGSTPCPTCQ) adopts an RING-type zinc-finger fold. The B box-type zinc finger occupies 83-124 (VPQGHCLEHMDPLSVYCEQDKELICGVCASLGKHKGHNIITA). Residues 135–232 (LPQQQVILQE…QMEGVLKDVE (98 aa)) adopt a coiled-coil conformation. In terms of domain architecture, B30.2/SPRY spans 272–476 (DEFKFQVWRK…LKIFYPPAEQ (205 aa)).

The protein belongs to the TRIM/RBCC family. As to quaternary structure, homodimer. Homooligomer; disulfide-linked. Oligomerizes on the phospholipid membrane. Post-translationally, disulfide bond formation at Cys-244 occurs in case of membrane damage that cause the entry of the oxidized milieu of the extracellular space, resulting in homooligomerization.

It localises to the cell membrane. The protein localises to the sarcolemma. It is found in the cytoplasmic vesicle membrane. The enzyme catalyses S-ubiquitinyl-[E2 ubiquitin-conjugating enzyme]-L-cysteine + [acceptor protein]-L-lysine = [E2 ubiquitin-conjugating enzyme]-L-cysteine + N(6)-ubiquitinyl-[acceptor protein]-L-lysine.. It functions in the pathway protein modification; protein ubiquitination. Its activity is regulated as follows. Specifically binds phosphatidylserine. The binding to phospholipids enhances ubiquitination activity. Functionally, muscle-specific E3 ubiquitin-protein ligase that plays a central role in cell membrane repair by nucleating the assembly of the repair machinery at injury sites. Acts as a sensor of oxidation: upon membrane damage, entry of extracellular oxidative environment results in disulfide bond formation and homooligomerization at the injury site. This oligomerization acts as a nucleation site for recruitment of TRIM72-containing vesicles to the injury site, leading to membrane patch formation. Probably acts upstream of the Ca(2+)-dependent membrane resealing process. Required for transport of DYSF to sites of cell injury during repair patch formation. Regulates membrane budding and exocytosis. May be involved in the regulation of the mobility of KCNB1-containing endocytic vesicles. This Xenopus laevis (African clawed frog) protein is Tripartite motif-containing protein 72 (trim72).